We begin with the raw amino-acid sequence, 399 residues long: Succinate--CoA ligase [ADP-forming] subunit beta (399 aa).

The region spanning 9–254 (KAVLKSFGAP…TTEEDEKEIE (246 aa)) is the ATP-grasp domain. Residues lysine 46, 53–55 (GRG), glutamate 109, alanine 112, and glutamate 117 contribute to the ATP site. Asparagine 209 and aspartate 223 together coordinate Mg(2+). Residues asparagine 274 and 331–333 (GIM) contribute to the substrate site.

This sequence belongs to the succinate/malate CoA ligase beta subunit family. Heterotetramer of two alpha and two beta subunits. Mg(2+) serves as cofactor.

It catalyses the reaction succinate + ATP + CoA = succinyl-CoA + ADP + phosphate. The enzyme catalyses GTP + succinate + CoA = succinyl-CoA + GDP + phosphate. It participates in carbohydrate metabolism; tricarboxylic acid cycle; succinate from succinyl-CoA (ligase route): step 1/1. Succinyl-CoA synthetase functions in the citric acid cycle (TCA), coupling the hydrolysis of succinyl-CoA to the synthesis of either ATP or GTP and thus represents the only step of substrate-level phosphorylation in the TCA. The beta subunit provides nucleotide specificity of the enzyme and binds the substrate succinate, while the binding sites for coenzyme A and phosphate are found in the alpha subunit. This chain is Succinate--CoA ligase [ADP-forming] subunit beta, found in Maricaulis maris (strain MCS10) (Caulobacter maris).